The following is a 396-amino-acid chain: Subtilisin-like protease 5 (396 aa).

The N-terminal stretch at 1 to 20 is a signal peptide; that stretch reads MTGFFTFLSFSLAALSVTNA. Positions 21–116 are excised as a propeptide; the sequence is AHILSVPKGA…VEPDAIISQH (96 aa). Residues 37–113 form the Inhibitor I9 domain; the sequence is YIVVMKDDTS…VAFVEPDAII (77 aa). N-linked (GlcNAc...) asparagine glycosylation occurs at Asn-63. Positions 125 to 396 constitute a Peptidase S8 domain; that stretch reads PWGLSRLSNR…SRLLYNGSGR (272 aa). Active-site charge relay system residues include Asp-156 and His-187. Residues Asn-230 and Asn-248 are each glycosylated (N-linked (GlcNAc...) asparagine). Ser-342 functions as the Charge relay system in the catalytic mechanism. The segment covering 376 to 389 has biased composition (polar residues); sequence PTIRNPGPDTTSRL. Residues 376 to 396 form a disordered region; the sequence is PTIRNPGPDTTSRLLYNGSGR. A glycan (N-linked (GlcNAc...) asparagine) is linked at Asn-392.

Belongs to the peptidase S8 family.

The protein resides in the secreted. Functionally, secreted subtilisin-like serine protease with keratinolytic activity that contributes to pathogenicity. This is Subtilisin-like protease 5 (SUB5) from Trichophyton tonsurans (Scalp ringworm fungus).